A 37-amino-acid chain; its full sequence is Mu-agatoxin-Aa1e (37 aa).

4 cysteine pairs are disulfide-bonded: Cys2/Cys18, Cys9/Cys23, Cys17/Cys33, and Cys25/Cys31. At Asn37 the chain carries Asparagine amide.

The protein belongs to the neurotoxin 07 (Beta/delta-agtx) family. 03 (aga-4) subfamily. Aga sub-subfamily. Expressed by the venom gland.

The protein localises to the secreted. Functionally, insecticidal neurotoxin that induces an irreversible spastic paralysis when injected into insects. Modifies presynaptic voltage-gated sodium channels (Nav), causing them to open at the normal resting potential of the nerve. This leads to spontaneous release of neurotransmitter and repetitive action potentials in motor neurons. This Agelenopsis aperta (North American funnel-web spider) protein is Mu-agatoxin-Aa1e.